A 199-amino-acid chain; its full sequence is Isopentenyl-diphosphate Delta-isomerase (199 aa).

Residues His40 and His47 each coordinate Mn(2+). Positions 45–186 (PRHLAFSCHV…PALLSPWAVE (142 aa)) constitute a Nudix hydrolase domain. Residue Cys82 is part of the active site. Residue Cys82 participates in Mg(2+) binding. Residue His84 coordinates Mn(2+). Glu102 lines the Mg(2+) pocket. Mn(2+)-binding residues include Glu131 and Glu133. Residue Glu133 is part of the active site.

The protein belongs to the IPP isomerase type 1 family. Mg(2+) serves as cofactor. It depends on Mn(2+) as a cofactor.

Its subcellular location is the cytoplasm. The enzyme catalyses isopentenyl diphosphate = dimethylallyl diphosphate. It participates in isoprenoid biosynthesis; dimethylallyl diphosphate biosynthesis; dimethylallyl diphosphate from isopentenyl diphosphate: step 1/1. Functionally, catalyzes the 1,3-allylic rearrangement of the homoallylic substrate isopentenyl (IPP) to its highly electrophilic allylic isomer, dimethylallyl diphosphate (DMAPP). The protein is Isopentenyl-diphosphate Delta-isomerase of Cutibacterium acnes (strain DSM 16379 / KPA171202) (Propionibacterium acnes).